A 174-amino-acid chain; its full sequence is Crossover junction endodeoxyribonuclease RuvC (174 aa).

Catalysis depends on residues Asp-8, Glu-67, and Asp-139. Mg(2+)-binding residues include Asp-8, Glu-67, and Asp-139.

This sequence belongs to the RuvC family. As to quaternary structure, homodimer which binds Holliday junction (HJ) DNA. The HJ becomes 2-fold symmetrical on binding to RuvC with unstacked arms; it has a different conformation from HJ DNA in complex with RuvA. In the full resolvosome a probable DNA-RuvA(4)-RuvB(12)-RuvC(2) complex forms which resolves the HJ. Mg(2+) is required as a cofactor.

The protein localises to the cytoplasm. The catalysed reaction is Endonucleolytic cleavage at a junction such as a reciprocal single-stranded crossover between two homologous DNA duplexes (Holliday junction).. In terms of biological role, the RuvA-RuvB-RuvC complex processes Holliday junction (HJ) DNA during genetic recombination and DNA repair. Endonuclease that resolves HJ intermediates. Cleaves cruciform DNA by making single-stranded nicks across the HJ at symmetrical positions within the homologous arms, yielding a 5'-phosphate and a 3'-hydroxyl group; requires a central core of homology in the junction. The consensus cleavage sequence is 5'-(A/T)TT(C/G)-3'. Cleavage occurs on the 3'-side of the TT dinucleotide at the point of strand exchange. HJ branch migration catalyzed by RuvA-RuvB allows RuvC to scan DNA until it finds its consensus sequence, where it cleaves and resolves the cruciform DNA. In Stutzerimonas stutzeri (strain A1501) (Pseudomonas stutzeri), this protein is Crossover junction endodeoxyribonuclease RuvC.